Here is a 248-residue protein sequence, read N- to C-terminus: uncharacterized protein (248 aa).

Residues 7–25 (TIFIGGIYGLGVYIGAVAW) traverse the membrane as a helical segment.

It belongs to the methyltransferase superfamily. METL family.

Its subcellular location is the mitochondrion inner membrane. In terms of biological role, probable methyltransferase. This is an uncharacterized protein from Schizosaccharomyces pombe (strain 972 / ATCC 24843) (Fission yeast).